A 133-amino-acid chain; its full sequence is Protein msa (133 aa).

4 helical membrane passes run Y3 to L23, I27 to F47, Y55 to M75, and F103 to Y123.

The protein resides in the cell membrane. Accessory element involved in the expression of sarA and several virulence factors. Modulates SarA production and/or function in a strain-dependent manner. Affects the transcription of the accessory gene regulator (agr) and genes encoding virulence factors including alpha toxin (hla) and protein A (spa). The polypeptide is Protein msa (msa) (Staphylococcus aureus (strain bovine RF122 / ET3-1)).